Here is a 573-residue protein sequence, read N- to C-terminus: Sulfite reductase [NADPH] hemoprotein beta-component (573 aa).

[4Fe-4S] cluster is bound by residues Cys-438, Cys-444, Cys-483, and Cys-487. A siroheme-binding site is contributed by Cys-487.

It belongs to the nitrite and sulfite reductase 4Fe-4S domain family. As to quaternary structure, alpha(8)-beta(8). The alpha component is a flavoprotein, the beta component is a hemoprotein. Siroheme is required as a cofactor. The cofactor is [4Fe-4S] cluster.

The catalysed reaction is hydrogen sulfide + 3 NADP(+) + 3 H2O = sulfite + 3 NADPH + 4 H(+). It participates in sulfur metabolism; hydrogen sulfide biosynthesis; hydrogen sulfide from sulfite (NADPH route): step 1/1. Its function is as follows. Component of the sulfite reductase complex that catalyzes the 6-electron reduction of sulfite to sulfide. This is one of several activities required for the biosynthesis of L-cysteine from sulfate. The sequence is that of Sulfite reductase [NADPH] hemoprotein beta-component from Geobacillus thermodenitrificans (strain NG80-2).